We begin with the raw amino-acid sequence, 373 residues long: Leucoanthocyanidin dioxygenase 2 (373 aa).

The Fe2OG dioxygenase domain maps to leucine 216–proline 315. Histidine 240, aspartate 242, and histidine 296 together coordinate Fe cation. Arginine 306 is a binding site for 2-oxoglutarate.

It belongs to the iron/ascorbate-dependent oxidoreductase family. Requires L-ascorbate as cofactor. It depends on Fe(2+) as a cofactor.

It carries out the reaction a (2R,3S,4S)-leucoanthocyanidin + 2-oxoglutarate + O2 = a 4-H-anthocyanidin with a 3-hydroxy group + succinate + CO2 + 2 H2O. It participates in pigment biosynthesis; anthocyanin biosynthesis. Functionally, involved in anthocyanin and protoanthocyanidin biosynthesis by catalyzing the oxidation of leucoanthocyanidins into anthocyanidins. This is Leucoanthocyanidin dioxygenase 2 from Oryza sativa subsp. japonica (Rice).